We begin with the raw amino-acid sequence, 336 residues long: Glyceraldehyde-3-phosphate dehydrogenase (336 aa).

NAD(+) contacts are provided by residues 12–13 (RI), Asp-34, and Arg-79. Residues 150 to 152 (SCT), Thr-181, 210 to 211 (TG), and Arg-233 each bind D-glyceraldehyde 3-phosphate. Cys-151 acts as the Nucleophile in catalysis. Asn-315 serves as a coordination point for NAD(+).

This sequence belongs to the glyceraldehyde-3-phosphate dehydrogenase family. Homotetramer.

The protein localises to the cytoplasm. It catalyses the reaction D-glyceraldehyde 3-phosphate + phosphate + NAD(+) = (2R)-3-phospho-glyceroyl phosphate + NADH + H(+). It participates in carbohydrate degradation; glycolysis; pyruvate from D-glyceraldehyde 3-phosphate: step 1/5. This is Glyceraldehyde-3-phosphate dehydrogenase (gpdA) from Aspergillus niger.